Here is a 549-residue protein sequence, read N- to C-terminus: Glucose-6-phosphate isomerase (549 aa).

Glu-355 serves as the catalytic Proton donor. Active-site residues include His-386 and Lys-514.

Belongs to the GPI family.

It is found in the cytoplasm. It carries out the reaction alpha-D-glucose 6-phosphate = beta-D-fructose 6-phosphate. Its pathway is carbohydrate biosynthesis; gluconeogenesis. The protein operates within carbohydrate degradation; glycolysis; D-glyceraldehyde 3-phosphate and glycerone phosphate from D-glucose: step 2/4. Catalyzes the reversible isomerization of glucose-6-phosphate to fructose-6-phosphate. The polypeptide is Glucose-6-phosphate isomerase (Salmonella paratyphi A (strain AKU_12601)).